The chain runs to 421 residues: MYDAVTRPSPPADASAWPRRITQAVKVGNVIVGGGHPVVVQSMTNTDTADIAGSVKQVAELWRAGSEMVRLTVNNAESAAAIPRIVEKLRMMGIEVPLIGDFHYNGHQLLTAEPACAEALAKYRINPGNVGFGKKKDLQFAQLIEFAIQYDKPVRIGANWGSLDQALAAQLMDENSKRETPWDAGRVLREALIRSAVDSAERAVELGLPRERIILSAKVSGVQELIAVYRDMAARCDFALHLGLTEAGIGSKGIVASAAALSVLLQEGIGDTIRISLTPEPGQSRTQEVIVAQELLQTTGQRAFTPLVTACPGCGRTTSEFFQELAGVVQNHVRAKMPEWKISNPGAENMTLAVMGCVVNGPGESRHANIGISLPGTGEAPSAPVFVDGEKTVTLRGENIAYEFIDLIDQYVERTYVRRAG.

Residues Cys311, Cys314, Cys357, and Glu364 each contribute to the [4Fe-4S] cluster site.

This sequence belongs to the IspG family. [4Fe-4S] cluster serves as cofactor.

It catalyses the reaction (2E)-4-hydroxy-3-methylbut-2-enyl diphosphate + oxidized [flavodoxin] + H2O + 2 H(+) = 2-C-methyl-D-erythritol 2,4-cyclic diphosphate + reduced [flavodoxin]. It participates in isoprenoid biosynthesis; isopentenyl diphosphate biosynthesis via DXP pathway; isopentenyl diphosphate from 1-deoxy-D-xylulose 5-phosphate: step 5/6. In terms of biological role, converts 2C-methyl-D-erythritol 2,4-cyclodiphosphate (ME-2,4cPP) into 1-hydroxy-2-methyl-2-(E)-butenyl 4-diphosphate. This is 4-hydroxy-3-methylbut-2-en-1-yl diphosphate synthase (flavodoxin) from Xanthomonas campestris pv. campestris (strain 8004).